The chain runs to 262 residues: Phosphonates import ATP-binding protein PhnC (262 aa).

In terms of domain architecture, ABC transporter spans 5-253 (IRVEKLAKTF…RFDHLYRSIN (249 aa)). 37–44 (GPSGSGKS) serves as a coordination point for ATP.

Belongs to the ABC transporter superfamily. Phosphonates importer (TC 3.A.1.9.1) family. The complex is composed of two ATP-binding proteins (PhnC), two transmembrane proteins (PhnE) and a solute-binding protein (PhnD).

Its subcellular location is the cell inner membrane. It catalyses the reaction phosphonate(out) + ATP + H2O = phosphonate(in) + ADP + phosphate + H(+). In terms of biological role, part of the ABC transporter complex PhnCDE involved in phosphonates import. Responsible for energy coupling to the transport system. This Shigella flexneri serotype 5b (strain 8401) protein is Phosphonates import ATP-binding protein PhnC.